Consider the following 314-residue polypeptide: Vomeronasal type-1 receptor 95 (314 aa).

At 1–18 the chain is on the extracellular side; that stretch reads MNKDNTLYCSAYRIAFFS. The chain crosses the membrane as a helical span at residues 19–39; sequence EIGIGISANSCLLLFHTFMFI. The Cytoplasmic segment spans residues 40–48; the sequence is RGHRPRLTD. A helical membrane pass occupies residues 49–69; that stretch reads LPIGLVALIHLVMLLLAAYIT. At 70-88 the chain is on the extracellular side; sequence EDFFMSSGGWDDITCKLFI. An intrachain disulfide couples Cys84 to Cys171. A helical transmembrane segment spans residues 89–113; sequence FLHRFFRSLSVCDTCMLSVFQAIIL. Over 114–133 the chain is Cytoplasmic; it reads CPQSSHLAKFKLNSPHHLSC. Residues 134–154 traverse the membrane as a helical segment; that stretch reads FFIFMSIFYTSISSHILIAAI. The Extracellular portion of the chain corresponds to 155 to 186; that stretch reads ATQNLTSVNLIYITKSCSFLPMSSSMQRTFST. Residue Asn158 is glycosylated (N-linked (GlcNAc...) asparagine). Residues 187 to 207 form a helical membrane-spanning segment; it reads LLAFRNVFLIGLMGLSTCYMA. The Cytoplasmic portion of the chain corresponds to 208-235; that stretch reads TLLCRHKTRSQQLQNSKLSPKATPEQRA. A helical membrane pass occupies residues 236–256; it reads IWTILMLMSFFLIISTFDSIM. The Extracellular portion of the chain corresponds to 257–268; that stretch reads TYSRTIFQGNQS. N-linked (GlcNAc...) asparagine glycosylation is present at Asn266. The chain crosses the membrane as a helical span at residues 269–289; sequence LYCVQIPVAHGYAAFSPLLVL. The Cytoplasmic segment spans residues 290-314; that stretch reads NNEKRLTSLMISMYDRIVRLESLCS.

It belongs to the G-protein coupled receptor 1 family.

It localises to the cell membrane. In terms of biological role, putative pheromone receptor implicated in the regulation of social as well as reproductive behavior. This Rattus norvegicus (Rat) protein is Vomeronasal type-1 receptor 95 (Vom1r95).